The following is a 242-amino-acid chain: Ribosomal RNA small subunit methyltransferase G (242 aa).

Residues Gly78, Phe83, 129 to 130 (AE), and Arg148 contribute to the S-adenosyl-L-methionine site.

It belongs to the methyltransferase superfamily. RNA methyltransferase RsmG family.

The protein localises to the cytoplasm. Its function is as follows. Specifically methylates the N7 position of a guanine in 16S rRNA. This is Ribosomal RNA small subunit methyltransferase G from Lachnoclostridium phytofermentans (strain ATCC 700394 / DSM 18823 / ISDg) (Clostridium phytofermentans).